A 46-amino-acid polypeptide reads, in one-letter code: uncharacterized protein (46 aa).

This is an uncharacterized protein from Bacillus subtilis (strain 168).